The chain runs to 123 residues: Small ribosomal subunit protein uS11 (123 aa).

A disordered region spans residues 1 to 22 (MAKKRKKKLSSPEGISHIHASA).

Belongs to the universal ribosomal protein uS11 family. As to quaternary structure, part of the 30S ribosomal subunit. Interacts with proteins S7 and S18. Binds to IF-3.

Its function is as follows. Located on the platform of the 30S subunit, it bridges several disparate RNA helices of the 16S rRNA. Forms part of the Shine-Dalgarno cleft in the 70S ribosome. The polypeptide is Small ribosomal subunit protein uS11 (Malacoplasma penetrans (strain HF-2) (Mycoplasma penetrans)).